The primary structure comprises 168 residues: Small ribosomal subunit protein uS5 (168 aa).

In terms of domain architecture, S5 DRBM spans 14 to 77 (FEERVVSINR…EAAKKNLITV (64 aa)).

The protein belongs to the universal ribosomal protein uS5 family. As to quaternary structure, part of the 30S ribosomal subunit. Contacts proteins S4 and S8.

Its function is as follows. With S4 and S12 plays an important role in translational accuracy. Functionally, located at the back of the 30S subunit body where it stabilizes the conformation of the head with respect to the body. This is Small ribosomal subunit protein uS5 from Lactococcus lactis subsp. lactis (strain IL1403) (Streptococcus lactis).